Reading from the N-terminus, the 212-residue chain is Small ribosomal subunit protein uS3 (212 aa).

The 69-residue stretch at 38–106 folds into the KH type-2 domain; that stretch reads IRKFVKKTLY…EFAIEVNEIR (69 aa).

The protein belongs to the universal ribosomal protein uS3 family. In terms of assembly, part of the 30S ribosomal subunit. Forms a tight complex with proteins S10 and S14.

In terms of biological role, binds the lower part of the 30S subunit head. Binds mRNA in the 70S ribosome, positioning it for translation. In Nitratidesulfovibrio vulgaris (strain ATCC 29579 / DSM 644 / CCUG 34227 / NCIMB 8303 / VKM B-1760 / Hildenborough) (Desulfovibrio vulgaris), this protein is Small ribosomal subunit protein uS3.